The following is a 35-amino-acid chain: Phospholipase A2 neuwieditoxin-1 (35 aa).

Positions 27, 29, and 31 each coordinate Ca(2+).

The protein belongs to the phospholipase A2 family. Group II subfamily. D49 sub-subfamily. As to quaternary structure, dimer. Requires Ca(2+) as cofactor. As to expression, expressed by the venom gland.

It localises to the secreted. The catalysed reaction is a 1,2-diacyl-sn-glycero-3-phosphocholine + H2O = a 1-acyl-sn-glycero-3-phosphocholine + a fatty acid + H(+). Its function is as follows. Snake venom phospholipase A2 (PLA2) that shows presynaptic neurotoxicity. 10 ug/ml of this protein produce complete neuromuscular blockade up to 80 minutes, without inhibiting the responses to acetylcholine (ACh) and potassium chloride (KCl). In addition, it produces a calcium-dependent blockade of acetylcholine release and causes appearance of giant miniature end-plate potentials. PLA2 catalyzes the calcium-dependent hydrolysis of the 2-acyl groups in 3-sn-phosphoglycerides. In Bothrops pauloensis (Neuwied's lancehead), this protein is Phospholipase A2 neuwieditoxin-1.